The chain runs to 285 residues: Urease accessory protein UreD 1 (285 aa).

It belongs to the UreD family. As to quaternary structure, ureD, UreF and UreG form a complex that acts as a GTP-hydrolysis-dependent molecular chaperone, activating the urease apoprotein by helping to assemble the nickel containing metallocenter of UreC. The UreE protein probably delivers the nickel.

The protein localises to the cytoplasm. Required for maturation of urease via the functional incorporation of the urease nickel metallocenter. This Pseudomonas syringae pv. syringae (strain B728a) protein is Urease accessory protein UreD 1.